A 110-amino-acid chain; its full sequence is Phosphoribosyl-AMP cyclohydrolase (110 aa).

Asp-80 is a Mg(2+) binding site. Cys-81 contacts Zn(2+). Residues Asp-82 and Asp-84 each contribute to the Mg(2+) site. Cys-97 and Cys-104 together coordinate Zn(2+).

It belongs to the PRA-CH family. Homodimer. It depends on Mg(2+) as a cofactor. Requires Zn(2+) as cofactor.

It is found in the cytoplasm. It catalyses the reaction 1-(5-phospho-beta-D-ribosyl)-5'-AMP + H2O = 1-(5-phospho-beta-D-ribosyl)-5-[(5-phospho-beta-D-ribosylamino)methylideneamino]imidazole-4-carboxamide. Its pathway is amino-acid biosynthesis; L-histidine biosynthesis; L-histidine from 5-phospho-alpha-D-ribose 1-diphosphate: step 3/9. Its function is as follows. Catalyzes the hydrolysis of the adenine ring of phosphoribosyl-AMP. The polypeptide is Phosphoribosyl-AMP cyclohydrolase (Clostridium botulinum (strain ATCC 19397 / Type A)).